A 420-amino-acid polypeptide reads, in one-letter code: MLDRNKLRNNLDFFKKKLVERGVSESQFEAYVQADKAMRKLLHQIELANQKQTLLAQQVAKKKGDPKLLKESKELKQKLEQLNIAFKEAETLSQELLLNLPNIADESVPVGRDETANLELLKEGRKPVFDFTPLPHWELCERLQLVAFDKATKLTGARFVAYTDKAAKLLRAIASLMIDLNKNKYQEWNVPVIVNETSLTGTGQLPKFKDDVFKLENTRYYLSPTLEVQLANLHANEIFTEGELPKYYTATGVNFRQEAGSAGKQTKGTIRLHQFQKVELVKFCKPSEAIHELEEMTRDAEQILLELKIPFRRLLLCSGDMGFSAQKTYDLEVWMAGCNEYREVSSCSSCGDFQARRAMIRYKDLTTGKNTYVATLNGTALAIDRIFAAILEHYQTKAGEVMIPQALLKYLDFDKITKPK.

Residue 225–227 coordinates L-serine; that stretch reads TLE. 256 to 258 provides a ligand contact to ATP; that stretch reads RQE. Glu-279 contacts L-serine. 343–346 is an ATP binding site; it reads EVSS. Thr-379 provides a ligand contact to L-serine.

It belongs to the class-II aminoacyl-tRNA synthetase family. Type-1 seryl-tRNA synthetase subfamily. As to quaternary structure, homodimer. The tRNA molecule binds across the dimer.

The protein localises to the cytoplasm. It catalyses the reaction tRNA(Ser) + L-serine + ATP = L-seryl-tRNA(Ser) + AMP + diphosphate + H(+). The catalysed reaction is tRNA(Sec) + L-serine + ATP = L-seryl-tRNA(Sec) + AMP + diphosphate + H(+). The protein operates within aminoacyl-tRNA biosynthesis; selenocysteinyl-tRNA(Sec) biosynthesis; L-seryl-tRNA(Sec) from L-serine and tRNA(Sec): step 1/1. Its function is as follows. Catalyzes the attachment of serine to tRNA(Ser). Is also able to aminoacylate tRNA(Sec) with serine, to form the misacylated tRNA L-seryl-tRNA(Sec), which will be further converted into selenocysteinyl-tRNA(Sec). This Mycoplasma pneumoniae (strain ATCC 29342 / M129 / Subtype 1) (Mycoplasmoides pneumoniae) protein is Serine--tRNA ligase.